We begin with the raw amino-acid sequence, 354 residues long: Small ribosomal subunit biogenesis GTPase RsgA (354 aa).

The tract at residues 1–46 is disordered; it reads MSKKKPLSQGQLRRMRANHEKRLNRDSGDKNTPELQDSSLGPEQSG. Over residues 17-32 the composition is skewed to basic and acidic residues; that stretch reads ANHEKRLNRDSGDKNT. The span at 33–46 shows a compositional bias: polar residues; that stretch reads PELQDSSLGPEQSG. Residues 108 to 276 form the CP-type G domain; sequence HSSLSRPDLY…LIDSPGVREF (169 aa). GTP contacts are provided by residues 164–167 and 218–226; these read NKID and GQSGVGKSS. The Zn(2+) site is built by Cys300, Cys305, His307, and Cys313.

This sequence belongs to the TRAFAC class YlqF/YawG GTPase family. RsgA subfamily. In terms of assembly, monomer. Associates with 30S ribosomal subunit, binds 16S rRNA. The cofactor is Zn(2+).

Its subcellular location is the cytoplasm. Functionally, one of several proteins that assist in the late maturation steps of the functional core of the 30S ribosomal subunit. Helps release RbfA from mature subunits. May play a role in the assembly of ribosomal proteins into the subunit. Circularly permuted GTPase that catalyzes slow GTP hydrolysis, GTPase activity is stimulated by the 30S ribosomal subunit. In Shewanella oneidensis (strain ATCC 700550 / JCM 31522 / CIP 106686 / LMG 19005 / NCIMB 14063 / MR-1), this protein is Small ribosomal subunit biogenesis GTPase RsgA.